A 514-amino-acid chain; its full sequence is Cytochrome bd-II ubiquinol oxidase subunit 1 (514 aa).

Residues 1–22 are Cytoplasmic-facing; sequence MWDVIDLSRWQFALTALYHFLF. H19 contacts heme. Residues 23–42 traverse the membrane as a helical segment; that stretch reads VPLTLGLIFLLAIMETIYVV. Residues 43 to 94 lie on the Periplasmic side of the membrane; that stretch reads TGKTIYRDMTRFWGKLFGINFALGVATGLTMEFQFGTNWSFYSNYVGDIFGA. The helical transmembrane segment at 95–114 threads the bilayer; that stretch reads PLAMEALMAFFLESTFVGLF. At 115 to 129 the chain is on the cytoplasmic side; the sequence is FFGWQRLNKYQHLLV. A helical membrane pass occupies residues 130 to 149; the sequence is TWLVAFGSNLSALWILNANG. Residues 150–187 are Periplasmic-facing; that stretch reads WMQYPTGAHFDIDTLRMEMTSFSELVFNPVSQVKFVHT. H186 lines the heme pocket. The chain crosses the membrane as a helical span at residues 188–207; that stretch reads VMAGYVTGAMFIMAISAWYL. Residues 208–219 are Cytoplasmic-facing; that stretch reads LRGRERNVALRS. A helical transmembrane segment spans residues 220–239; sequence FAIGSVFGTLAIIGTLQLGD. Topologically, residues 240–392 are periplasmic; that stretch reads SSAYEVAQVQ…VAPVFWSFRI (153 aa). Residue M393 coordinates heme. A helical membrane pass occupies residues 393–412; that stretch reads MVGCGSLLLLVMLIALVQTL. Residues 413–470 lie on the Cytoplasmic side of the membrane; it reads RGKIDQHRWVLKMALWSLPLPWIAIEAGWFMTEFGRQPWAIQDILPTYSAHSALTTGQ. Residues 471–490 traverse the membrane as a helical segment; it reads LAFSLIMIVGLYTLFLIAEV. Topologically, residues 491-514 are periplasmic; the sequence is YLMQKYARLGPSAMQSEQPTQQQG.

It belongs to the cytochrome ubiquinol oxidase subunit 1 family. Heterodimer of subunits I and II. It depends on heme as a cofactor. Post-translationally, the N-terminus is blocked.

The protein resides in the cell inner membrane. The catalysed reaction is 2 a ubiquinol + O2 + n H(+)(in) = 2 a ubiquinone + 2 H2O + n H(+)(out). It participates in energy metabolism; oxidative phosphorylation. Its activity is regulated as follows. Inhibited by cyanide; is more sensitive to cyanide than cytochrome bd-I oxidase. In terms of biological role, a terminal oxidase that catalyzes quinol-dependent, Na(+)-independent oxygen uptake. Prefers menadiol over other quinols although ubiquinol was not tested. Generates a proton motive force using protons and electrons from opposite sides of the membrane to generate H(2)O, transferring 1 proton/electron. The protein is Cytochrome bd-II ubiquinol oxidase subunit 1 (appC) of Escherichia coli (strain K12).